The following is a 307-amino-acid chain: Type 2A encapsulin shell protein (307 aa).

This sequence belongs to the encapsulin family. Family 2A subfamily. In terms of assembly, homooligomeric. The encapsulin nanocompartment is formed by 60 subunits; monomers form pentamers which assemble to form shells. There are 12 charged pores where the pentamers meet as well as 3-fold axis channels and dimer channels. In terms of processing, the N-terminus is blocked.

The protein resides in the encapsulin nanocompartment. It localises to the cytoplasm. Its subcellular location is the cytosol. The protein localises to the cell membrane. Functionally, shell component of a type 2A encapsulin nanocompartment. Forms encapsulin nanocompartments about 24 nm in diameter from 60 monomers. Probably encapsulates at least cysteine desulfurase (CyD, AC O32975) and allows passage of cysteine into its interior, probably involved in sulfur metabolism. Expression in M.smegmatis generates a multimeric protein, whereas expression in E.coli does not. The chain is Type 2A encapsulin shell protein from Mycobacterium leprae (strain TN).